The chain runs to 276 residues: D-aminoacyl-tRNA deacylase (276 aa).

It belongs to the DtdA deacylase family. As to quaternary structure, monomer. Zn(2+) serves as cofactor.

The catalysed reaction is a D-aminoacyl-tRNA + H2O = a tRNA + a D-alpha-amino acid + H(+). It carries out the reaction glycyl-tRNA(Ala) + H2O = tRNA(Ala) + glycine + H(+). D-aminoacyl-tRNA deacylase with broad substrate specificity. By recycling D-aminoacyl-tRNA to D-amino acids and free tRNA molecules, this enzyme counteracts the toxicity associated with the formation of D-aminoacyl-tRNA entities in vivo. In Korarchaeum cryptofilum (strain OPF8), this protein is D-aminoacyl-tRNA deacylase.